The sequence spans 439 residues: Trigger factor (439 aa).

A PPIase FKBP-type domain is found at 162–247; sequence GDRLTLDFIG…LKKVEAMILP (86 aa).

The protein belongs to the FKBP-type PPIase family. Tig subfamily.

The protein resides in the cytoplasm. It catalyses the reaction [protein]-peptidylproline (omega=180) = [protein]-peptidylproline (omega=0). Involved in protein export. Acts as a chaperone by maintaining the newly synthesized protein in an open conformation. Functions as a peptidyl-prolyl cis-trans isomerase. The sequence is that of Trigger factor from Dichelobacter nodosus (strain VCS1703A).